A 333-amino-acid polypeptide reads, in one-letter code: tRNA N6-adenosine threonylcarbamoyltransferase (333 aa).

Fe cation contacts are provided by histidine 111 and histidine 115. Substrate-binding positions include 134-138 (LVSGG), aspartate 167, glycine 180, and asparagine 272. Aspartate 300 is a binding site for Fe cation.

The protein belongs to the KAE1 / TsaD family. Fe(2+) is required as a cofactor.

Its subcellular location is the cytoplasm. It carries out the reaction L-threonylcarbamoyladenylate + adenosine(37) in tRNA = N(6)-L-threonylcarbamoyladenosine(37) in tRNA + AMP + H(+). In terms of biological role, required for the formation of a threonylcarbamoyl group on adenosine at position 37 (t(6)A37) in tRNAs that read codons beginning with adenine. Is involved in the transfer of the threonylcarbamoyl moiety of threonylcarbamoyl-AMP (TC-AMP) to the N6 group of A37, together with TsaE and TsaB. TsaD likely plays a direct catalytic role in this reaction. The protein is tRNA N6-adenosine threonylcarbamoyltransferase of Legionella pneumophila (strain Paris).